Consider the following 126-residue polypeptide: Adenosine 5'-monophosphoramidase HINT1 (126 aa).

At A2 the chain carries N-acetylalanine. The 109-residue stretch at 18–126 folds into the HIT domain; the sequence is IFGKIIRKEI…GGRQMNWPPG (109 aa). An N6-acetyllysine mark is found at K21 and K30. An AMP-binding site is contributed by 43 to 44; the sequence is DI. A phosphoserine mark is found at S45 and S72. AMP is bound by residues N99, 105–107, and 112–114; these read GQS and HLH. Residues 110–114 carry the Histidine triad motif motif; the sequence is HIHLH. H112 acts as the Tele-AMP-histidine intermediate in catalysis.

The protein belongs to the HINT family. As to quaternary structure, homodimer. Interacts with CDK7. Interacts with RUVBL1 and RUVBL2 and is associated with the LEF1/TCF1-CTNNB1 complex and with a KAT5 histone acetyltransferase complex. Identified in a complex with MITF and CTNNB1. Interacts with CDC34 and RBX1, and is part of a SCF (SKP2-CUL1-F-box protein) E3 ubiquitin-protein ligase complex. Interacts with SUMO1, SUMO2 and RGS17. Interacts with the Ten-1 ICD form of TENM1. Interacts with CALM1; interaction increases in the presence of calcium ions.

The protein resides in the cytoplasm. Its subcellular location is the nucleus. The catalysed reaction is adenosine 5'-phosphoramidate + H2O = AMP + NH4(+). Its function is as follows. Exhibits adenosine 5'-monophosphoramidase activity, hydrolyzing purine nucleotide phosphoramidates with a single phosphate group such as adenosine 5'monophosphoramidate (AMP-NH2) to yield AMP and NH2. Hydrolyzes adenosine 5'monophosphomorpholidate (AMP-morpholidate) and guanosine 5'monophosphomorpholidate (GMP-morpholidate). Hydrolyzes lysyl-AMP (AMP-N-epsilon-(N-alpha-acetyl lysine methyl ester)) generated by lysine tRNA ligase, as well as Met-AMP, His-AMP and Asp-AMP, lysyl-GMP (GMP-N-epsilon-(N-alpha-acetyl lysine methyl ester)) and AMP-N-alanine methyl ester. Can also convert adenosine 5'-O-phosphorothioate and guanosine 5'-O-phosphorothioate to the corresponding nucleoside 5'-O-phosphates with concomitant release of hydrogen sulfide. In addition, functions as a scaffolding protein that modulates transcriptional activation by the LEF1/TCF1-CTNNB1 complex and by the complex formed with MITF and CTNNB1. Modulates p53/TP53 levels and p53/TP53-mediated apoptosis. Modulates proteasomal degradation of target proteins by the SCF (SKP2-CUL1-F-box protein) E3 ubiquitin-protein ligase complex. Also exhibits SUMO-specific isopeptidase activity, deconjugating SUMO1 from RANGAP1 and RGS17. The sequence is that of Adenosine 5'-monophosphoramidase HINT1 (Hint1) from Rattus norvegicus (Rat).